A 256-amino-acid polypeptide reads, in one-letter code: Cell division protein DivIB (256 aa).

Topologically, residues 1-23 (MSKDLISTDEYIKIKKKRKRIKK) are cytoplasmic. The helical transmembrane segment at 24–44 (IVVLFIFLISILVTLCLKIPY) threads the bilayer. The region spanning 45-113 (FNIESIEIKG…NKLEIYVKER (69 aa)) is the POTRA domain. Residues 45–256 (FNIESIEIKG…EGNPVFYIEK (212 aa)) are Extracellular-facing.

Belongs to the FtsQ/DivIB family. DivIB subfamily.

It localises to the cell membrane. Cell division protein that may be involved in stabilizing or promoting the assembly of the division complex. The protein is Cell division protein DivIB of Clostridium botulinum (strain Loch Maree / Type A3).